We begin with the raw amino-acid sequence, 395 residues long: Elongation factor Tu (395 aa).

The tr-type G domain maps to 10–204; the sequence is KPHLNIGTIG…AVDTWIELPE (195 aa). The interval 19–26 is G1; it reads GHVDHGKT. Residue 19 to 26 coordinates GTP; sequence GHVDHGKT. Residue threonine 26 coordinates Mg(2+). The tract at residues 60-64 is G2; sequence GITIN. The segment at 81–84 is G3; the sequence is DCPG. GTP-binding positions include 81 to 85 and 136 to 139; these read DCPGH and NKVD. A G4 region spans residues 136–139; the sequence is NKVD. Positions 174–176 are G5; it reads SAL.

Belongs to the TRAFAC class translation factor GTPase superfamily. Classic translation factor GTPase family. EF-Tu/EF-1A subfamily. In terms of assembly, monomer.

The protein resides in the cytoplasm. It carries out the reaction GTP + H2O = GDP + phosphate + H(+). Functionally, GTP hydrolase that promotes the GTP-dependent binding of aminoacyl-tRNA to the A-site of ribosomes during protein biosynthesis. The protein is Elongation factor Tu of Christiangramia forsetii (strain DSM 17595 / CGMCC 1.15422 / KT0803) (Gramella forsetii).